We begin with the raw amino-acid sequence, 384 residues long: Substance-K receptor (384 aa).

Residues 1–32 are Extracellular-facing; it reads MGAHASVTDTNILSGLESNATGVTAFSMPGWQ. Asn19 carries N-linked (GlcNAc...) asparagine glycosylation. A helical membrane pass occupies residues 33–56; sequence LALWATAYLALVLVAVTGNATVIW. At 57 to 69 the chain is on the cytoplasmic side; it reads IILAHERMRTVTN. A helical membrane pass occupies residues 70-90; that stretch reads YFIINLALADLCMAAFNATFN. Residues 91 to 107 are Extracellular-facing; sequence FIYASHNIWYFGSTFCY. Cys106 and Cys181 are disulfide-bonded. A helical transmembrane segment spans residues 108 to 129; the sequence is FQNLFPVTAMFVSIYSMTAIAA. Residues 130–149 are Cytoplasmic-facing; that stretch reads DRYMAIVHPFQPRLSAPSTK. A helical transmembrane segment spans residues 150–170; the sequence is AVIAVIWLVALALASPQCFYS. Topologically, residues 171 to 196 are extracellular; sequence TITVDQGATKCVVAWPNDNGGKMLLL. A helical membrane pass occupies residues 197–218; that stretch reads YHLVVFVLIYFLPLVVMFAAYS. Residues 219 to 251 are Cytoplasmic-facing; that stretch reads VIGLTLWKRAVPRHQAHGANLRHLQAKKKFVKA. The chain crosses the membrane as a helical span at residues 252-272; sequence MVLVVVTFAICWLPYHLYFIL. Topologically, residues 273–290 are extracellular; that stretch reads GTFQEDIYYRKFIQQVYL. The chain crosses the membrane as a helical span at residues 291–310; the sequence is ALFWLAMSSTMYNPIIYCCL. Residues 311-384 lie on the Cytoplasmic side of the membrane; it reads NHRFRSGFRL…GPQDGEPAGP (74 aa). Cys324 carries the S-palmitoyl cysteine lipid modification. Residues 365-384 are disordered; that stretch reads HSEATNGQVGGPQDGEPAGP.

It belongs to the G-protein coupled receptor 1 family.

The protein resides in the cell membrane. Its function is as follows. This is a receptor for the tachykinin neuropeptide substance K (neurokinin A). It is associated with G proteins that activate a phosphatidylinositol-calcium second messenger system. The rank order of affinity of this receptor to tachykinins is: substance K &gt; neuromedin-K &gt; substance P. This chain is Substance-K receptor (Tacr2), found in Mus musculus (Mouse).